Consider the following 196-residue polypeptide: Chloroplastic ATP-dependent Clp protease proteolytic subunit 1 (196 aa).

The active-site Nucleophile is S101. Residue H126 is part of the active site.

Belongs to the peptidase S14 family. In terms of assembly, component of the chloroplastic Clp protease core complex which consist of at least 16 proteins: CLPP4 (3 copies), CLPP5 (3 copies), CLPR4 (2 copies), ClpP1 (1 copy), CLPP6 (1 copy), CLPR2 (1 copy), CLPT1 (1 copy), CLPT2 (1 copy) and 3 copies of CLPP3 and/or CLPR1 and/or CLPR3. The core complex is organized in two heptameric rings, one containing CLPP3,4,5,6 in a 1:2:3:1 ratio and the other CLPP1 and CLPR1,2,3,4 in a 3:1:1:1:1 ratio. In terms of tissue distribution, mostly expressed in leaves. Also detected in stems, and to a lower extent, in roots (at protein level).

Its subcellular location is the plastid. It localises to the chloroplast stroma. The enzyme catalyses Hydrolysis of proteins to small peptides in the presence of ATP and magnesium. alpha-casein is the usual test substrate. In the absence of ATP, only oligopeptides shorter than five residues are hydrolyzed (such as succinyl-Leu-Tyr-|-NHMec, and Leu-Tyr-Leu-|-Tyr-Trp, in which cleavage of the -Tyr-|-Leu- and -Tyr-|-Trp bonds also occurs).. Its function is as follows. Cleaves peptides in various proteins in a process that requires ATP hydrolysis. Has a chymotrypsin-like activity. Plays a major role in the degradation of misfolded proteins. The polypeptide is Chloroplastic ATP-dependent Clp protease proteolytic subunit 1 (Arabidopsis thaliana (Mouse-ear cress)).